A 125-amino-acid chain; its full sequence is uncharacterized protein (125 aa).

It is found in the plastid. It localises to the chloroplast. This is an uncharacterized protein from Guillardia theta (Cryptophyte).